Consider the following 498-residue polypeptide: Cytochrome P450 monooxygenase apdB (498 aa).

A helical transmembrane segment spans residues 20–40 (ASPQVFKLFVLILFVLLVLKI). Residue Cys457 coordinates heme.

It belongs to the cytochrome P450 family. The cofactor is heme.

It localises to the membrane. It participates in secondary metabolite biosynthesis. In terms of biological role, cytochrome P450 monooxygenase; part of the gene cluster that mediates the biosynthesis of aspyridones. The polyketide-amino acid backbone preaspyridone A is first assembled by the PKS-NRPS hybrid apdA. The assembly of preaspyridone A is initiated by loading of malonyl-CoA onto apdA, followed by decarboxylation to yield the acetyl starter unit. The growing polyketide chain then elongates into a tetraketide. The adpA PKS module catalyzes three Claisen condensations, as well as beta-keto processing and methylation. Alpha-methylation step during polyketide synthesis is a prerequisite and a key checkpoint for chain transfer between PKS and NRPS modules. The downstream NRPS module contains the condensation (C), adenylation (A), and thiolation (T) domains and catalyzes the incorporation of tyrosine via the formation of the L-tyrosinyl-thioester and the amide linkage between L-tyrosinyl-thioester and the tetraketide. The bimodular assembly line is terminated with a reductase (R) domain that facilitates formation and release of the tetramic acid product. Because apdA lacks a designated enoylreductase (ER) domain, the required activity is provided the enoyl reductase apdC. ApdC appears to operate with different stereoselectivity in different PKS cycle. Combined with apdC, apdA is proposed to synthesize preaspyridone A via about 20 enzymatic steps. A number of oxidative steps performed successively by the cytochrome P450 monooxygenases apdE and apdB are required for the conversion of preaspyridone A to aspyridone A. The cytochrome P450 monooxygenase apdE is responsible for the oxidative dephenylation of preaspyridone A. Finally, the predicted FAD-dependent monooxygenase apdD and the acyl-CoA dehydrogenase apdG may be involved in the transformation of aspyridone A into aspyridone B. The protein is Cytochrome P450 monooxygenase apdB of Emericella nidulans (strain FGSC A4 / ATCC 38163 / CBS 112.46 / NRRL 194 / M139) (Aspergillus nidulans).